The sequence spans 526 residues: Cytochrome P450 monooxygenase ucsK (526 aa).

A helical transmembrane segment spans residues 7 to 27 (PVLAAATAVSFGFYLAGLFVY). The N-linked (GlcNAc...) asparagine glycan is linked to Asn-403. Cys-467 serves as a coordination point for heme.

This sequence belongs to the cytochrome P450 family. Heme is required as a cofactor.

The protein localises to the membrane. Its pathway is mycotoxin biosynthesis. Functionally, cytochrome P450 monooxygenase; part of the gene cluster that mediates the biosynthesis of UCS1025A, a member of the pyrrolizidinone family that acts as a strong telomerase inhibitor and displays potent antibacterial and antitumor properties. These compounds share a hemiaminal-containing pyrrolizidinone core fused with a gamma-lactone, giving a furopyrrolizidine that is connected to a decalin fragment. The polyketide synthase module (PKS) of the PKS-NRPS ucsA is responsible for the synthesis of the polyketide backbone via the condensation of an acetyl-CoA starter unit with 6 malonyl-CoA units. The downstream nonribosomal peptide synthetase (NRPS) module then amidates the carboxyl end of the polyketide with a 2S,3S-methylproline derived from L-isoleucine by the 2-oxoglutarate-dependent dioxygenase ucsF which converts L-isoleucine to (4S,5S)-4-methylpyrroline-5-carboxylate that is further converted to 2S,3S-methylproline by the pyrroline-5-carboxylate reductase ucsG. Reductive release of the completed aminoacyl polyketide from the assembly line can form the 3-pyrrolin-2-one structure via an intramolecular Knoevenagel reaction. Because ucsA lacks a designated enoylreductase (ER) domain, the required activity is provided the enoyl reductase ucsL. This keto acyclic precursor is the substrate of the Diels-Alderase ucsH, that catalyzes the Diels-Alder cycloaddition. Oxidation of the 3S-methyl group to a carboxylate by the cytochrome P450 monooxygenase ucsK allows an oxa-Michael cyclization that might involve the reductase/dehydrogenase ucsI and which furnishes the furopyrrolizidine. The oxidase ucsJ likely plays a critical role in stereoselective reduction of the C5-C6 double bond to afford the required R-configured carboxylate group. Further enolization and oxidation at C5 by an unidentified enzyme affords the last intermediate that can undergo oxa-Michael cyclization to yield UCS1025A. This Acremonium sp protein is Cytochrome P450 monooxygenase ucsK.